Consider the following 114-residue polypeptide: Beta-microseminoprotein (114 aa).

Residues 1 to 20 (MNVLLGGFVIFATFVTLCNA) form the signal peptide. 5 disulfide bridges follow: C22/C70, C38/C62, C57/C93, C60/C69, and C84/C107.

This sequence belongs to the beta-microseminoprotein family. In terms of assembly, homodimer; Interacts with PI16.

The protein localises to the secreted. The protein is Beta-microseminoprotein (MSMB) of Macaca mulatta (Rhesus macaque).